The chain runs to 82 residues: Putative membrane protein insertion efficiency factor (82 aa).

The tract at residues 63–82 (PGGHDPVPESTILSKEKSVK) is disordered.

This sequence belongs to the UPF0161 family.

The protein localises to the cell inner membrane. Functionally, could be involved in insertion of integral membrane proteins into the membrane. The sequence is that of Putative membrane protein insertion efficiency factor from Protochlamydia amoebophila (strain UWE25).